We begin with the raw amino-acid sequence, 522 residues long: Stellatic acid synthase (522 aa).

A helical membrane pass occupies residues 23-43 (IYGIYEPLLALFAVYSVAVVV). Asn-267 and Asn-451 each carry an N-linked (GlcNAc...) asparagine glycan. Position 464 (Cys-464) interacts with heme. An N-linked (GlcNAc...) asparagine glycan is attached at Asn-495.

Belongs to the cytochrome P450 family. It depends on heme as a cofactor.

It is found in the membrane. The enzyme catalyses stellata-2,6,19-triene + 3 reduced [NADPH--hemoprotein reductase] + 3 O2 = stellatate + 3 oxidized [NADPH--hemoprotein reductase] + 4 H2O + 4 H(+). It functions in the pathway secondary metabolite biosynthesis; terpenoid biosynthesis. Its function is as follows. Cytochrome P450 monooxygenase; part of the gene cluster that mediates the biosynthesis of the sesterterpene stellatic acid. The first step in the pathway is performed by the stellatatriene synthase that possesses both prenyl transferase and terpene cyclase activity, converting isopentenyl diphosphate and dimethylallyl diphosphate into geranylgeranyl diphosphate (GGDP) and then converting GGDP into stellata-2,6,19-triene. The cytochrome P450 monooxygenase Stl-P450 then catalyzes three successive oxidation reactions on the C-20 methyl group to generate the carboxylic acid of stellatic acid. This chain is Stellatic acid synthase, found in Emericella variicolor (Aspergillus stellatus).